The chain runs to 348 residues: Organic solute transporter alpha-like protein 3 (348 aa).

The Extracellular segment spans residues 1–49 (MAKEHGAMRSVLNLIGSVMLPQDTSNCSDRHDTPSAPEFLSHLQPFQTV). N-linked (GlcNAc...) asparagine glycosylation is present at asparagine 26. Residues 50–70 (LLSIASFSTTIVLCLSLIHWF) traverse the membrane as a helical segment. The Cytoplasmic segment spans residues 71-84 (YVYKYVSIEKRRNK). Residues 85–105 (LYWLIAVFPVACSCSFIAMCV) form a helical membrane-spanning segment. The Extracellular segment spans residues 106 to 109 (PRTA). Residues 110 to 130 (VILTCIGVLYYLMCLFVIVSL) form a helical membrane-spanning segment. At 131-180 (ARHLFGGRESFSTCLQYDDRPIDFRSPPFCCIIPKLPTARSTEKNIRRLE) the chain is on the cytoplasmic side. The chain crosses the membrane as a helical span at residues 181–201 (WCVLQAPIVRSIIIFLDVVAV). The Extracellular portion of the chain corresponds to 202–213 (AEMREDATPYIR). The chain crosses the membrane as a helical span at residues 214-234 (YSDMASLCSLLLAIFGVHTLA). The Cytoplasmic portion of the chain corresponds to 235-240 (RVTSNK). Residues 241–261 (LSAYCFMSMFRLVDISLLFFS) traverse the membrane as a helical segment. The Extracellular segment spans residues 262–291 (AQQPMIFQNVLLRFNLISCGPLLNAQENAY). The chain crosses the membrane as a helical span at residues 292–312 (FVCNFIITCEMLLLSVLATWL). The Cytoplasmic segment spans residues 313–348 (LAPRHNAMFDAYRPSMALSETTASLNETEQSMILDH).

It belongs to the OST-alpha family.

Its subcellular location is the cell membrane. Functionally, probable transporter. The protein is Organic solute transporter alpha-like protein 3 (osta-3) of Caenorhabditis elegans.